The following is a 365-amino-acid chain: MAYKVLVVDDSQFFQVRLKQIINEHPDLEVVGIAANGQEAIDLEESLRPDIISMDYEMPHLDGISAVRSILSKRPIPIVMFSSMTYEGATITLEALDAGAVDFIPKNFAEVSRDSVVLKKRLHEKLLLFAQKAKPSVAARSTTQPSGVRPSALGANLSSSRSPRPASSAPSAPKKRIKGLVKLVAIGASTGGPVAVSEIITRLPANFPVPVIVAQHMPENFTKAFSERLNRQSAVEVREAQDGDLLKSGVVYVAPGGNQLMVDKTGRSIRILDGDARLTYKPSVDVLFASAASAMGDKVLAIVLTGMGADGCDGAKLLKQKGATIWGQDKDSCVVYGMPAAVAKAGLTDEVLPLDQVWQRLVSDV.

The 118-residue stretch at 4–121 (KVLVVDDSQF…SRDSVVLKKR (118 aa)) folds into the Response regulatory domain. Aspartate 55 is modified (4-aspartylphosphate). The interval 138–173 (AARSTTQPSGVRPSALGANLSSSRSPRPASSAPSAP) is disordered. Residues 158–172 (SSSRSPRPASSAPSA) show a composition bias toward low complexity. Residues 182-365 (KLVAIGASTG…QVWQRLVSDV (184 aa)) form the CheB-type methylesterase domain. Residues serine 189, histidine 216, and aspartate 310 contribute to the active site.

It belongs to the CheB family. In terms of processing, phosphorylated by CheA. Phosphorylation of the N-terminal regulatory domain activates the methylesterase activity.

Its subcellular location is the cytoplasm. The enzyme catalyses [protein]-L-glutamate 5-O-methyl ester + H2O = L-glutamyl-[protein] + methanol + H(+). It carries out the reaction L-glutaminyl-[protein] + H2O = L-glutamyl-[protein] + NH4(+). Its function is as follows. Involved in chemotaxis. Part of a chemotaxis signal transduction system that modulates chemotaxis in response to various stimuli. Catalyzes the demethylation of specific methylglutamate residues introduced into the chemoreceptors (methyl-accepting chemotaxis proteins or MCP) by CheR. Also mediates the irreversible deamidation of specific glutamine residues to glutamic acid. This is Protein-glutamate methylesterase/protein-glutamine glutaminase 1 from Saccharophagus degradans (strain 2-40 / ATCC 43961 / DSM 17024).